Here is a 692-residue protein sequence, read N- to C-terminus: Elongation factor G (692 aa).

One can recognise a tr-type G domain in the interval 8-282 (ENTRNIGIMA…AVIDYLPSPL (275 aa)). Residues 17–24 (AHIDAGKT), 81–85 (DTPGH), and 135–138 (NKMD) each bind GTP.

It belongs to the TRAFAC class translation factor GTPase superfamily. Classic translation factor GTPase family. EF-G/EF-2 subfamily.

The protein localises to the cytoplasm. In terms of biological role, catalyzes the GTP-dependent ribosomal translocation step during translation elongation. During this step, the ribosome changes from the pre-translocational (PRE) to the post-translocational (POST) state as the newly formed A-site-bound peptidyl-tRNA and P-site-bound deacylated tRNA move to the P and E sites, respectively. Catalyzes the coordinated movement of the two tRNA molecules, the mRNA and conformational changes in the ribosome. This chain is Elongation factor G, found in Bacillus mycoides (strain KBAB4) (Bacillus weihenstephanensis).